The chain runs to 748 residues: Pleckstrin homology domain-containing family M member 3 (748 aa).

2 disordered regions span residues 88 to 107 and 129 to 187; these read HAKE…PLLS and NDSL…RNKN. Composition is skewed to basic and acidic residues over residues 129 to 140 and 148 to 159; these read NDSLDHLEDAPK and SRSDVSHIDWKN. Positions 167-180 are enriched in polar residues; the sequence is QRSSSQGMHCTSPF. PH domains are found at residues 200–297 and 348–443; these read NILK…EAIC and NIIK…SAAN. The Phorbol-ester/DAG-type zinc-finger motif lies at 656–709; that stretch reads SHVYSCSLCSQKGFICEICNNGEILYPFEENSTSRCENCGAVFHSDCKVRTVPC.

It is found in the cytoplasm. The protein localises to the golgi apparatus. It localises to the cell membrane. May play a role during muscle differentiation. In Xenopus laevis (African clawed frog), this protein is Pleckstrin homology domain-containing family M member 3 (plekhm3).